The following is a 658-amino-acid chain: Aminopeptidase P1 (658 aa).

The a peptide site is built by Arg-69 and His-436. 3 residues coordinate Mn(2+): Asp-456, Asp-467, and His-530. The a peptide site is built by His-530, His-539, and Glu-563. Residues Glu-563 and Glu-577 each contribute to the Mn(2+) site.

The protein belongs to the peptidase M24B family. Homodimer. Interacts with N-1-naphthylphthalamic acid (NPA). Interacts with NBCL/BOP2/COCH around the plasma membrane and in the nucleus; this interaction disturbs its regulation of the nuclear transcription factor Y subunit (NF-YA1). Mn(2+) serves as cofactor. The cofactor is Zn(2+). As to expression, expressed at similar levels in shoot apical meristems (SAM), root meristems (RM), root apical meristems (RAM), roots and leaves and, to a slightly lesser degree, in root nodules.

It is found in the nucleus. The protein localises to the cytoplasm. It localises to the cell membrane. Its subcellular location is the microsome membrane. The enzyme catalyses Release of any N-terminal amino acid, including proline, that is linked to proline, even from a dipeptide or tripeptide.. In terms of biological role, catalyzes the removal of a penultimate prolyl residue from the N-termini of peptides, such as Arg-Pro-Pro. Aminopeptidase that binds to the auxin transport inhibitor N-1-naphthylphthalamic acid (NPA). May play a negative role in the regulation of PIN auxin transport proteins. Involved in the coordination of the symbiotic nodule developmental program; prevents the formation of root nodules by regulating the expression of the nuclear transcription factor Y subunit (NF-YA1), a key nodulin. In Lotus japonicus (Lotus corniculatus var. japonicus), this protein is Aminopeptidase P1.